A 376-amino-acid polypeptide reads, in one-letter code: Glucose-1-phosphate adenylyltransferase (376 aa).

Residues Tyr101, Gly166, Glu181 to Lys182, and Ser192 each bind alpha-D-glucose 1-phosphate.

This sequence belongs to the bacterial/plant glucose-1-phosphate adenylyltransferase family. Homotetramer.

The enzyme catalyses alpha-D-glucose 1-phosphate + ATP + H(+) = ADP-alpha-D-glucose + diphosphate. Its pathway is glycan biosynthesis; glycogen biosynthesis. Involved in the biosynthesis of ADP-glucose, a building block required for the elongation reactions to produce glycogen. Catalyzes the reaction between ATP and alpha-D-glucose 1-phosphate (G1P) to produce pyrophosphate and ADP-Glc. The sequence is that of Glucose-1-phosphate adenylyltransferase from Bacillus thuringiensis (strain Al Hakam).